The following is a 157-amino-acid chain: Ribosome maturation factor RimP (157 aa).

The protein belongs to the RimP family.

It is found in the cytoplasm. Its function is as follows. Required for maturation of 30S ribosomal subunits. The sequence is that of Ribosome maturation factor RimP from Geobacillus sp. (strain WCH70).